The primary structure comprises 294 residues: N-acetylmuramic acid 6-phosphate etherase (294 aa).

The 164-residue stretch at valine 54–lysine 217 folds into the SIS domain. The active-site Proton donor is the glutamate 82. Residue glutamate 113 is part of the active site.

The protein belongs to the GCKR-like family. MurNAc-6-P etherase subfamily. In terms of assembly, homodimer.

It catalyses the reaction N-acetyl-D-muramate 6-phosphate + H2O = N-acetyl-D-glucosamine 6-phosphate + (R)-lactate. The protein operates within amino-sugar metabolism; N-acetylmuramate degradation. Its function is as follows. Specifically catalyzes the cleavage of the D-lactyl ether substituent of MurNAc 6-phosphate, producing GlcNAc 6-phosphate and D-lactate. This chain is N-acetylmuramic acid 6-phosphate etherase, found in Bacillus cereus (strain G9842).